We begin with the raw amino-acid sequence, 130 residues long: Iron-sulfur cluster insertion protein ErpA 2 (130 aa).

3 residues coordinate iron-sulfur cluster: Cys-58, Cys-122, and Cys-124.

The protein belongs to the HesB/IscA family. Homodimer. Requires iron-sulfur cluster as cofactor.

Required for insertion of 4Fe-4S clusters for at least IspG. The protein is Iron-sulfur cluster insertion protein ErpA 2 of Methylococcus capsulatus (strain ATCC 33009 / NCIMB 11132 / Bath).